The primary structure comprises 193 residues: MVYVISIEGIIGSGKSSLMDQLKRHYTCHQEPLHDWSLLQPFYDDMERYASPFQFQVLFSFHKLYSTIKNVNDVVILERCPWSSRNIFTKMLVQDGFISPQEYELYMSFYDRLAFTTNLHIYLKVDPTVAFDRILKRNREAEKTLQYDYLVRLNHQYEAEISKCDNVYVVDANKPMELVGNTVLRLLSRLCRR.

Position 9-17 (9-17 (GIIGSGKSS)) interacts with ATP. 3 residues coordinate substrate: Glu31, Tyr43, and Gln54. The Proton acceptor role is filled by Glu78. Substrate contacts are provided by Arg79 and Glu142.

The protein belongs to the DCK/DGK family.

In Aedes vexans (Inland floodwater mosquito), this protein is Putative kinase protein 029R.